A 552-amino-acid polypeptide reads, in one-letter code: Probable acyl-activating enzyme 5, peroxisomal (552 aa).

Residues 550-552 carry the Microbody targeting signal motif; it reads SRM.

The protein belongs to the ATP-dependent AMP-binding enzyme family. Expressed in roots, stems and developing seeds.

The protein localises to the peroxisome. Functionally, may act as an acid--thiol ligase that activates carboxylic acids by forming acyl-CoAs. The protein is Probable acyl-activating enzyme 5, peroxisomal (AAE5) of Arabidopsis thaliana (Mouse-ear cress).